The sequence spans 97 residues: Ice-structuring protein (97 aa).

Residues 1 to 23 form the signal peptide; that stretch reads MALSLFTVGQLIFLFWTLRITEA. The propeptide at 24–48 is removed by a dipeptidylpeptidase; the sequence is NPDPAAKAAPAAVADPAAAAAAAVA.

This sequence belongs to the type-I AFP family. Detected in blood serum (at protein level).

The protein resides in the secreted. In terms of biological role, contributes to protect fish blood from freezing at subzero sea water temperatures. Lowers the blood freezing point. Binds to nascent ice crystals and prevents further growth. The polypeptide is Ice-structuring protein (Myzopsetta ferruginea (Yellowtail flounder)).